The primary structure comprises 318 residues: Na(+)-translocating ferredoxin:NAD(+) oxidoreductase complex subunit D (318 aa).

The next 3 membrane-spanning stretches (helical) occupy residues 35–55 (LAVA…ICVI), 77–99 (WSAV…WWIG), and 114–134 (FGGL…FLLA). Thr-156 bears the FMN phosphoryl threonine mark. A run of 3 helical transmembrane segments spans residues 182-202 (VYGC…LYLI), 206-226 (IISW…ALLV), and 261-281 (IIYA…GGYP).

Belongs to the NqrB/RnfD family. In terms of assembly, the complex is composed of six subunits: RnfA, RnfB, RnfC, RnfD, RnfE and RnfG. FMN serves as cofactor.

The protein resides in the cell membrane. It catalyses the reaction 2 reduced [2Fe-2S]-[ferredoxin] + Na(+)(in) + NAD(+) + H(+) = 2 oxidized [2Fe-2S]-[ferredoxin] + Na(+)(out) + NADH. Its function is as follows. Part of a membrane-bound complex that couples electron transfer with translocation of ions across the membrane. Couples electron transfer from reduced ferredoxin to NAD(+) with electrogenic movement of Na(+) out of the cell. Involved in caffeate respiration. This Acetobacterium woodii (strain ATCC 29683 / DSM 1030 / JCM 2381 / KCTC 1655 / WB1) protein is Na(+)-translocating ferredoxin:NAD(+) oxidoreductase complex subunit D.